We begin with the raw amino-acid sequence, 1052 residues long: uncharacterized protein (1052 aa).

A Helicase ATP-binding domain is found at 389–561 (WINKGKTFAI…NKGGNYIMIN (173 aa)). 400–407 (SAMGTGKT) contributes to the ATP binding site.

The protein belongs to the mimivirus R1 family.

This is an uncharacterized protein from Acanthamoeba polyphaga mimivirus (APMV).